Consider the following 467-residue polypeptide: MSTQSVIAVKQFSGPDKIAQAYTVPQPSAHVLSNANYDYDLCGSTNSTSLSCAIQSSNIKTESISSSSLPKILPFSTDSNGESSLSRMSQAEFSDPILSSSSTFCTSLYTSSPMNSGSCRKTGYLPFLPQPPKCEQQQNSVGQSSSSLMLLDADLRNSGHADDEHTDDLKDFLNLSSDCSFHGKCSAMAYNEQMEFQFLSEQLGIAISNNEESPRLDDIYDRPPQLMSLPVSSCSDQEDLQDARSPAKVQLSSSRSSSGTASCNKPRLRWTPELHERFVDAVNKLEGPEKATPKGVLKLMKVEGLTIYHIKSHLQKYRLAKYLPETKEDKKQEEKKTKSVANGNDHAKKKSAQMAEALRMQMEVQKQLHEQLEVQRQLQLRIEEHARYLQKILEEQQKARESISSMTSTTEGESPEFAPMEKTEDKAETSSAPLSKCRITDTDAECHSKVDNKKTKPQADLEMVHDE.

The segment at 227–266 (MSLPVSSCSDQEDLQDARSPAKVQLSSSRSSSGTASCNKP) is disordered. Residues 262–322 (SCNKPRLRWT…HLQKYRLAKY (61 aa)) form the HTH myb-type domain. A DNA-binding region (H-T-H motif) is located at residues 293-318 (PKGVLKLMKVEGLTIYHIKSHLQKYR). Residues 327–337 (KEDKKQEEKKT) show a composition bias toward basic and acidic residues. Disordered stretches follow at residues 327–353 (KEDK…KSAQ) and 400–467 (RESI…VHDE). Polar residues predominate over residues 402 to 412 (SISSMTSTTEG). Basic and acidic residues-rich tracts occupy residues 419 to 428 (PMEKTEDKAE) and 438 to 467 (RITD…VHDE).

The protein localises to the nucleus. Functionally, transcription factor involved in phosphate starvation signaling. Binds to P1BS, an imperfect palindromic sequence 5'-GNATATNC-3', to promote the expression of inorganic phosphate (Pi) starvation-responsive genes. Functionally redundant with PHR1 and PHR2 in regulating Pi starvation response and Pi homeostasis. The protein is Protein PHOSPHATE STARVATION RESPONSE 3 of Oryza sativa subsp. indica (Rice).